The primary structure comprises 306 residues: MSQSDLDRQIAQLRNCENITEGEVKALCTKAREILVEESNVQRVDAPVTICGDIHGQFFDLMELFKVGGDCPDTNYLFLGDFVDRGFNSVETFLLLLALKVRYPDRITLIRGNHESRQITQVYGFYDECLRKYGSLNVWRYCTDIFDYLSLAAVIEEKIFCVHGGLSPSIKTMDDIRAIDRKQEVPHDGAMCDLMWSDPDEIEGWNLSPRGAGYLFGGDVVDDFNRKNNIELICRAHQLVMEGYRVMFNEQLVTVWSAPNYCYRCGNVASILELDENLAKSYKIFEAAPQENRGLPAKKPIPDYFL.

Asp-53, His-55, Asp-81, and Asn-113 together coordinate Mn(2+). His-114 acts as the Proton donor in catalysis. His-163 and His-237 together coordinate Mn(2+).

The protein belongs to the PPP phosphatase family. PP-4 (PP-X) subfamily. The cofactor is Mn(2+).

The catalysed reaction is O-phospho-L-seryl-[protein] + H2O = L-seryl-[protein] + phosphate. It catalyses the reaction O-phospho-L-threonyl-[protein] + H2O = L-threonyl-[protein] + phosphate. This is Serine/threonine-protein phosphatase PP-X homolog 4 (Ppx4) from Paramecium tetraurelia.